The sequence spans 405 residues: Arginine biosynthesis bifunctional protein ArgJ (405 aa).

Polar residues predominate over residues 1-18 (MTSADKNNPDTSTAQGSS). Residues 1-21 (MTSADKNNPDTSTAQGSSADL) are disordered. Positions 167, 189, 200, 281, 400, and 405 each coordinate substrate. Catalysis depends on Thr-200, which acts as the Nucleophile.

It belongs to the ArgJ family. In terms of assembly, heterotetramer of two alpha and two beta chains.

It is found in the cytoplasm. It carries out the reaction N(2)-acetyl-L-ornithine + L-glutamate = N-acetyl-L-glutamate + L-ornithine. The catalysed reaction is L-glutamate + acetyl-CoA = N-acetyl-L-glutamate + CoA + H(+). It participates in amino-acid biosynthesis; L-arginine biosynthesis; L-ornithine and N-acetyl-L-glutamate from L-glutamate and N(2)-acetyl-L-ornithine (cyclic): step 1/1. It functions in the pathway amino-acid biosynthesis; L-arginine biosynthesis; N(2)-acetyl-L-ornithine from L-glutamate: step 1/4. Catalyzes two activities which are involved in the cyclic version of arginine biosynthesis: the synthesis of N-acetylglutamate from glutamate and acetyl-CoA as the acetyl donor, and of ornithine by transacetylation between N(2)-acetylornithine and glutamate. The polypeptide is Arginine biosynthesis bifunctional protein ArgJ (Corynebacterium jeikeium (strain K411)).